Reading from the N-terminus, the 476-residue chain is UDP-N-acetylmuramate--L-alanine ligase (476 aa).

126-132 contributes to the ATP binding site; it reads GAHGKTT.

This sequence belongs to the MurCDEF family.

The protein localises to the cytoplasm. The enzyme catalyses UDP-N-acetyl-alpha-D-muramate + L-alanine + ATP = UDP-N-acetyl-alpha-D-muramoyl-L-alanine + ADP + phosphate + H(+). It functions in the pathway cell wall biogenesis; peptidoglycan biosynthesis. In terms of biological role, cell wall formation. The sequence is that of UDP-N-acetylmuramate--L-alanine ligase from Psychrobacter sp. (strain PRwf-1).